Reading from the N-terminus, the 360-residue chain is Photosystem II protein D1 (360 aa).

The next 3 helical transmembrane spans lie at 29 to 46 (YIGWFGVLMIPTLLTATT), 118 to 133 (HFLLGVCGWIGREWEF), and 142 to 156 (WISVAFTAPVAAASA). Histidine 118 is a binding site for chlorophyll a. Pheophytin a is bound at residue tryptophan 126. 2 residues coordinate [CaMn4O5] cluster: aspartate 170 and glutamate 189. The chain crosses the membrane as a helical span at residues 197-218 (FHQLGVAGVFGGSLFSAMHGSL). Chlorophyll a is bound at residue histidine 198. Residues histidine 215 and 264-265 (SF) each bind a quinone. Histidine 215 lines the Fe cation pocket. Residue histidine 272 coordinates Fe cation. Residues 274–288 (FLGLWPVVGIWFTAL) traverse the membrane as a helical segment. 4 residues coordinate [CaMn4O5] cluster: histidine 332, glutamate 333, aspartate 342, and alanine 344. The propeptide occupies 345-360 (AGESLPVALTAPAVNG).

It belongs to the reaction center PufL/M/PsbA/D family. As to quaternary structure, PSII is composed of 1 copy each of membrane proteins PsbA, PsbB, PsbC, PsbD, PsbE, PsbF, PsbH, PsbI, PsbJ, PsbK, PsbL, PsbM, PsbT, PsbX, PsbY, PsbZ, Psb30/Ycf12, at least 3 peripheral proteins of the oxygen-evolving complex and a large number of cofactors. It forms dimeric complexes. The D1/D2 heterodimer binds P680, chlorophylls that are the primary electron donor of PSII, and subsequent electron acceptors. It shares a non-heme iron and each subunit binds pheophytin, quinone, additional chlorophylls, carotenoids and lipids. D1 provides most of the ligands for the Mn4-Ca-O5 cluster of the oxygen-evolving complex (OEC). There is also a Cl(-1) ion associated with D1 and D2, which is required for oxygen evolution. The PSII complex binds additional chlorophylls, carotenoids and specific lipids. is required as a cofactor. In terms of processing, tyr-161 forms a radical intermediate that is referred to as redox-active TyrZ, YZ or Y-Z. C-terminally processed by CTPA; processing is essential to allow assembly of the oxygen-evolving complex and thus photosynthetic growth.

Its subcellular location is the plastid. The protein resides in the chloroplast thylakoid membrane. It carries out the reaction 2 a plastoquinone + 4 hnu + 2 H2O = 2 a plastoquinol + O2. Photosystem II (PSII) is a light-driven water:plastoquinone oxidoreductase that uses light energy to abstract electrons from H(2)O, generating O(2) and a proton gradient subsequently used for ATP formation. It consists of a core antenna complex that captures photons, and an electron transfer chain that converts photonic excitation into a charge separation. The D1/D2 (PsbA/PsbD) reaction center heterodimer binds P680, the primary electron donor of PSII as well as several subsequent electron acceptors. This chain is Photosystem II protein D1, found in Rhodomonas salina (Cryptomonas salina).